The primary structure comprises 801 residues: Sucrose synthase isoform 2 (801 aa).

Residues Met271–Thr748 are GT-B glycosyltransferase.

Belongs to the glycosyltransferase 1 family. Plant sucrose synthase subfamily. Homotetramer. Exclusively expressed in flowers.

It catalyses the reaction an NDP-alpha-D-glucose + D-fructose = a ribonucleoside 5'-diphosphate + sucrose + H(+). Sucrose-cleaving enzyme that provides UDP-glucose and fructose for various metabolic pathways. This is Sucrose synthase isoform 2 from Daucus carota (Wild carrot).